A 286-amino-acid polypeptide reads, in one-letter code: Bifunctional protein FolD (286 aa).

NADP(+) contacts are provided by residues 165–167 (GRS) and Ser-190.

This sequence belongs to the tetrahydrofolate dehydrogenase/cyclohydrolase family. As to quaternary structure, homodimer.

The enzyme catalyses (6R)-5,10-methylene-5,6,7,8-tetrahydrofolate + NADP(+) = (6R)-5,10-methenyltetrahydrofolate + NADPH. The catalysed reaction is (6R)-5,10-methenyltetrahydrofolate + H2O = (6R)-10-formyltetrahydrofolate + H(+). It participates in one-carbon metabolism; tetrahydrofolate interconversion. Catalyzes the oxidation of 5,10-methylenetetrahydrofolate to 5,10-methenyltetrahydrofolate and then the hydrolysis of 5,10-methenyltetrahydrofolate to 10-formyltetrahydrofolate. The protein is Bifunctional protein FolD of Staphylococcus epidermidis (strain ATCC 35984 / DSM 28319 / BCRC 17069 / CCUG 31568 / BM 3577 / RP62A).